Consider the following 207-residue polypeptide: uncharacterized protein (207 aa).

This sequence belongs to the methyltransferase superfamily.

This is an uncharacterized protein from Escherichia coli (strain K12).